Reading from the N-terminus, the 1083-residue chain is Rho GTPase-activating protein 39 (1083 aa).

Ser2 carries the N-acetylserine modification. WW domains follow at residues 25–58 (NTRL…PPAG) and 63–97 (RTSE…RPQG). The disordered stretch occupies residues 110-154 (KQNTESPRASAESSPGRGSSVSREGSTSSSLEPEPDTEKAQELPA). Over residues 117 to 141 (RASAESSPGRGSSVSREGSTSSSLE) the composition is skewed to low complexity. A Phosphoserine modification is found at Ser169. Residues 226–369 (AAQGNGYAPD…NKQGPPSPCQ (144 aa)) are disordered. The span at 245–256 (PSGSQHSPSLQT) shows a compositional bias: polar residues. The segment covering 268–280 (PERRPSPFLKRAE) has biased composition (basic and acidic residues). 5 positions are modified to phosphoserine: Ser286, Ser384, Ser388, Ser406, and Ser407. 2 disordered regions span residues 405–545 (GSSP…EAEG) and 570–599 (MKQR…PGPV). Composition is skewed to polar residues over residues 474-488 (SWSS…TGYS) and 573-582 (RSSWDSQQDG). A phosphoserine mark is found at Ser604, Ser690, Ser715, and Ser726. The MyTH4 domain occupies 722–879 (WSSESIKKPM…PNVEEIRHAK (158 aa)). The region spanning 890–1078 (SALQEVMGMQ…VLIQHLDTSF (189 aa)) is the Rho-GAP domain.

The protein localises to the nucleus. In Homo sapiens (Human), this protein is Rho GTPase-activating protein 39 (ARHGAP39).